Consider the following 8799-residue polypeptide: Nesprin-1 (8799 aa).

Residues 1–289 (MATSRASSRS…TQYPDIHGAG (289 aa)) form an actin-binding region. Residues 1–8748 (MATSRASSRS…GRAFLFRILR (8748 aa)) are Cytoplasmic-facing. 2 consecutive Calponin-homology (CH) domains span residues 27 to 134 (IVQK…LYFQ) and 178 to 283 (GNAK…TQYP). Spectrin repeat units follow at residues 314-397 (RDDR…SRLF), 398-502 (DWHI…HLMK), 503-609 (MEFL…SMLE), 610-703 (EVIS…YARA), 704-815 (DEMD…QLTV), 816-923 (PLEE…KHVE), 924-1024 (ANSR…HLKI), 1025-1122 (AVEK…LVDD), 1123-1246 (PDKW…SSLE), 1247-1333 (GLIS…ERRI), 1334-1442 (QVSL…MEMV), 1443-1548 (KSKW…ILGH), 1549-1651 (LSQQ…LEDL), 1652-1761 (LARW…LQSV), 1762-1877 (LAEH…SHAC), 1878-1974 (MSTL…ADAL), 1975-2079 (VALK…QGQC), 2080-2193 (CGLI…LRVS), 2194-2301 (LSIW…KDFT), 2302-2399 (AQRT…QTQA), 2400-2511 (RIQD…LQDC), 2512-2617 (VSEL…LRSC), 2618-2729 (QLAL…LESV), 2730-2836 (IDQW…VEDL), 2837-2960 (VKDH…FGQV), 2961-3060 (TQLE…QNKE), 3061-3169 (QILQ…LENL), 3170-3273 (KIQM…VSRL), 3274-3385 (DRII…LEGA), 3386-3488 (LSKW…LEKL), 3489-3591 (VRLH…RMQL), 3592-3718 (NNVV…YSDW), 3719-3812 (YGST…LEKG), 3813-3918 (LHLA…LEAK), 3919-4026 (VKDH…QRVY), 4027-4137 (RSLE…KSLK), 4138-4233 (AELW…REQD), 4234-4337 (LQRT…IQVS), 4338-4449 (VTNL…LNKA), 4450-4558 (LSEK…LEKS), 4559-4667 (LVSR…TQEA), 4668-4774 (ILAR…LEDT), 4775-4880 (TSVY…CESR), 4881-4989 (MVQS…LTEI), 4990-5097 (YSRC…LQRC), 5098-5207 (MVQW…LEDA), 5208-5316 (VDEW…GKLV), 5317-5422 (KQEL…EEGK), 5423-5520 (AMSQ…LSKL), 5521-5628 (NQAL…LQDA), 5629-5745 (AKDM…PKEA), and 5746-5851 (VVQY…PSAH). Residues 314 to 8666 (RDDRLILKET…DLEKLLDMSS (8353 aa)) are a coiled coil. At K377 the chain carries Phosphoserine. At S732 the chain carries Phosphoserine. Positions 1288–1310 (KKRDLQEQMEQAQQGGQAGPGQE) are disordered. The residue at position 2268 (T2268) is a Phosphothreonine. At S5655 the chain carries Phosphoserine. Positions 5868 to 5894 (PVTEESGEEGTNSEISSPPACRSPSPV) are disordered. Spectrin repeat units follow at residues 5971-6080 (LERQ…LEEK), 6081-6187 (LSDQ…SLGE), 6377-6488 (RQSI…RLQQ), 6489-6584 (ILRF…RSSL), 6585-6694 (HQNL…LEMW), 6695-6798 (SHLD…TILK), 6799-6905 (HWTR…QEKL), 6906-7023 (HQLQ…LEGL), 7024-7131 (LESW…LTSA), 7132-7240 (LGQW…SKAL), 7241-7353 (LQLW…LQAG), 7354-7457 (VVDY…LQSF), 7458-7561 (LLQH…RGII), 7562-7674 (DSQI…LAFL), 7675-7786 (LKDW…NEWA), 7787-7886 (VFSE…LKET), 7887-8000 (LVAV…IEET), 8001-8109 (WRLW…LKHF), and 8110-8221 (ISQR…VRLP). D8225 and S8227 each carry phosphoserine. The interval 8237 to 8287 (TALSDLRWQDPSADGMPSPQPSSNPSLSLPQPLRSERSGRDTPASVDSIPL) is disordered. Low complexity predominate over residues 8257-8269 (PSSNPSLSLPQPL). T8278 carries the post-translational modification Phosphothreonine. Phosphoserine occurs at positions 8281, 8284, and 8308. 3 Spectrin repeats span residues 8332-8440 (SSLE…MKQN), 8441-8550 (LQKW…LQDA), and 8551-8668 (LMQC…SSSQ). T8363 carries the phosphothreonine modification. Positions 8673-8735 (SWSSADELDT…SDSSRSDPRP (63 aa)) are disordered. 2 stretches are compositionally biased toward polar residues: residues 8682 to 8698 (TSGS…PNRQ) and 8706 to 8718 (SLSQ…SSPK). The segment covering 8721–8735 (STRDGSDSSRSDPRP) has biased composition (basic and acidic residues). Residues 8740–8799 (RAFLFRILRAALPFQLLLLLLIGLTCLVPMSEKDYSCALSNNFARSFHPMLRYTNGPPPL) enclose the KASH domain. Residues 8749-8769 (AALPFQLLLLLLIGLTCLVPM) form a helical; Anchor for type IV membrane protein membrane-spanning segment. Residues 8770-8799 (SEKDYSCALSNNFARSFHPMLRYTNGPPPL) lie on the Perinuclear space side of the membrane.

This sequence belongs to the nesprin family. Core component of LINC complexes which are composed of inner nuclear membrane SUN domain-containing proteins coupled to outer nuclear membrane KASH domain-containing nesprins. SUN and KASH domain-containing proteins seem to bind each other promiscuously; however, differentially expression of LINC complex constituents can give rise to specific assemblies. At least SUN1/2-containing core LINC complexes are proposed to be hexameric composed of three protomers of each KASH and SUN domain-containing protein. The SUN2:SYNE1/KASH1 LINC complex is a heterohexamer; the homotrimeric cloverleave-like conformation of the SUN domain is a prerequisite for LINC complex formation in which three separate SYNE1/KASH1 peptides bind at the interface of adjacent SUN domains. Self-associates. Interacts with SYNE3. Interacts with SUN3; proposed to form a spermatogenesis-specific LINC complex with SUN3 during sperm head formation. May interact with MUSK. Interacts with SPAG4/SUN4. Interacts with EMD and LMNA in vitro. Interacts with F-actin via its N-terminal domain. Interacts with DCTN1 and DYNC1I1/2; suggesting the association with the dynein-dynactin motor complex. Interacts (via KASH domain) with TMEM258. Post-translationally, the disulfid bond with SUN1 or SUN2 is required for stability of the respective LINC complex under tensile forces. In terms of tissue distribution, expressed in C2F3 and CH310T1/2 cells, brain and skeletal muscle (at protein level).

Its subcellular location is the nucleus outer membrane. It localises to the nucleus. The protein resides in the nucleus envelope. It is found in the cytoplasm. The protein localises to the cytoskeleton. Its subcellular location is the myofibril. It localises to the sarcomere. Its function is as follows. Multi-isomeric modular protein which forms a linking network between organelles and the actin cytoskeleton to maintain the subcellular spatial organization. As a component of the LINC (LInker of Nucleoskeleton and Cytoskeleton) complex involved in the connection between the nuclear lamina and the cytoskeleton. The nucleocytoplasmic interactions established by the LINC complex play an important role in the transmission of mechanical forces across the nuclear envelope and in nuclear movement and positioning. May be involved in nucleus-centrosome attachment. During interkinetic nuclear migration (INM) at G2 phase and nuclear migration in neural progenitors its LINC complex association with SUN1/2 and probably association with cytoplasmic dynein-dynactin motor complexes functions to pull the nucleus toward the centrosome; SYNE1 and SYNE2 seem to act redundantly in cerebellum, midbrain, brain stem, and other brain regions except cerebral cortex and hippocampus. Required for centrosome migration to the apical cell surface during early ciliogenesis. May be involved in nuclear remodeling during sperm head formation in spermatogenesis; a probable SUN3:SYNE1/KASH1 LINC complex may tether spermatid nuclei to posterior cytoskeletal structures such as the manchette. This is Nesprin-1 from Mus musculus (Mouse).